The primary structure comprises 1021 residues: Multidrug resistance protein MdtC (1021 aa).

Residues 1-6 (MKFFAL) are Cytoplasmic-facing. A helical membrane pass occupies residues 7–29 (FIYRPVATILLSVAITLCGILGF). The Periplasmic portion of the chain corresponds to 30-335 (RMLPVAPLPQ…TIRASLEEVE (306 aa)). A helical transmembrane segment spans residues 336 to 353 (QTLIISVALVILVVFLFL). Over 354–359 (RSGRAT) the chain is Cytoplasmic. A helical membrane pass occupies residues 360–379 (IIPAVAVPVSLIGTFAAMYL). Residues 380-388 (CGFSLNNLS) are Periplasmic-facing. A helical membrane pass occupies residues 389–411 (LMALTIATGFVVDDAIVVLENIA). Over 412 to 430 (RHLEAGMKPLQAALQGTRE) the chain is Cytoplasmic. Residues 431–453 (VGFTVLSMSLSLVAVFLPLLLMG) traverse the membrane as a helical segment. Residues 454–467 (GLPGRLLREFAVTL) lie on the Periplasmic side of the membrane. Residues 468-490 (SVAIGISLLVSLTLTPMMCGWML) traverse the membrane as a helical segment. At 491–848 (KASKPREQKR…QVFQETMNSQ (358 aa)) the chain is on the cytoplasmic side. The helical transmembrane segment at 849–871 (VILIIAAIATVYIVLGILYESYV) threads the bilayer. Over 872–890 (HPLTILSTLPSAGVGALLA) the chain is Periplasmic. The chain crosses the membrane as a helical span at residues 891–913 (LELFNAPFSLIALIGIMLLIGIV). Residues 914 to 943 (KKNAIMMVDFALEAQRHGNLTPQEAIFQAC) lie on the Cytoplasmic side of the membrane. The helical transmembrane segment at 944–966 (LLRFRPIMMTTLAALFGALPLVL) threads the bilayer. Residues 967–980 (SGGDGSELRQPLEI) are Periplasmic-facing. A helical transmembrane segment spans residues 981–1003 (TIVGGLVMSQLLTLYTTPVVYLF). The Cytoplasmic portion of the chain corresponds to 1004 to 1021 (FDRLRLRFSRKPKQTVTE).

This sequence belongs to the resistance-nodulation-cell division (RND) (TC 2.A.6) family. MdtC subfamily. Part of a tripartite efflux system composed of MdtA, MdtB and MdtC. MdtC forms a heteromultimer with MdtB.

Its subcellular location is the cell inner membrane. The protein is Multidrug resistance protein MdtC of Shigella flexneri.